Here is a 340-residue protein sequence, read N- to C-terminus: Glycerol-3-phosphate dehydrogenase [NAD(P)+] (340 aa).

NADPH-binding residues include Trp11, Arg33, and Lys110. 3 residues coordinate sn-glycerol 3-phosphate: Lys110, Gly144, and Ser146. An NADPH-binding site is contributed by Ala148. Sn-glycerol 3-phosphate-binding residues include Lys199, Asp252, Ser262, Arg263, and Asn264. Catalysis depends on Lys199, which acts as the Proton acceptor. Arg263 serves as a coordination point for NADPH. 2 residues coordinate NADPH: Val287 and Glu289.

The protein belongs to the NAD-dependent glycerol-3-phosphate dehydrogenase family.

The protein localises to the cytoplasm. It catalyses the reaction sn-glycerol 3-phosphate + NAD(+) = dihydroxyacetone phosphate + NADH + H(+). The catalysed reaction is sn-glycerol 3-phosphate + NADP(+) = dihydroxyacetone phosphate + NADPH + H(+). It functions in the pathway membrane lipid metabolism; glycerophospholipid metabolism. In terms of biological role, catalyzes the reduction of the glycolytic intermediate dihydroxyacetone phosphate (DHAP) to sn-glycerol 3-phosphate (G3P), the key precursor for phospholipid synthesis. This Polynucleobacter asymbioticus (strain DSM 18221 / CIP 109841 / QLW-P1DMWA-1) (Polynucleobacter necessarius subsp. asymbioticus) protein is Glycerol-3-phosphate dehydrogenase [NAD(P)+].